The chain runs to 790 residues: Mitochondrial intermediate peptidase (790 aa).

The N-terminal 29 residues, methionine 1–asparagine 29, are a transit peptide targeting the mitochondrion. Position 570 (histidine 570) interacts with Zn(2+). The active site involves glutamate 571. Histidine 574 and histidine 577 together coordinate Zn(2+).

The protein belongs to the peptidase M3 family. It depends on Zn(2+) as a cofactor.

The protein resides in the mitochondrion matrix. It carries out the reaction Release of an N-terminal octapeptide as second stage of processing of some proteins imported into the mitochondrion.. Its function is as follows. Cleaves proteins, imported into the mitochondrion, to their mature size. While most mitochondrial precursor proteins are processed to the mature form in one step by mitochondrial processing peptidase (MPP), the sequential cleavage by MIP of an octapeptide after initial processing by MPP is a required step for a subgroup of nuclear-encoded precursor proteins destined for the matrix or the inner membrane. The protein is Mitochondrial intermediate peptidase (OCT1) of Phaeosphaeria nodorum (strain SN15 / ATCC MYA-4574 / FGSC 10173) (Glume blotch fungus).